The sequence spans 434 residues: Tyrosine-protein phosphatase non-receptor type 1 (434 aa).

The Tyrosine-protein phosphatase domain occupies 3–277 (IEKEFHRLDQ…RFSYLAVIEG (275 aa)). At S50 the chain carries Phosphoserine. Substrate contacts are provided by residues D181, 215–221 (CSAGIGR), and Q262. C215 acts as the Phosphocysteine intermediate in catalysis. The interval 291–319 (WKELSNEDLDPPPEHTPPPPRPPKRTSEM) is disordered.

This sequence belongs to the protein-tyrosine phosphatase family. Non-receptor class 1 subfamily. In terms of assembly, interacts with EPHA3 (phosphorylated); dephosphorylates EPHA3 and may regulate its trafficking and function. Interacts with MET. Interacts with NCK1. Phosphorylated on serine and threonine residues near the N-terminus by casein kinase II (CK2).

It is found in the endoplasmic reticulum membrane. The enzyme catalyses O-phospho-L-tyrosyl-[protein] + H2O = L-tyrosyl-[protein] + phosphate. May play an important role in CKII- and p60c-src-induced signal transduction cascades. May regulate the EFNA5-EPHA3 signaling pathway which modulates cell reorganization and cell-cell repulsion. May also regulate the hepatocyte growth factor receptor signaling pathway through dephosphorylation of MET. The chain is Tyrosine-protein phosphatase non-receptor type 1 (PTPN1) from Gallus gallus (Chicken).